The chain runs to 492 residues: Bifunctional purine biosynthesis protein PurH (492 aa).

An MGS-like domain is found at 1–144 (MKKAILSVSN…KNYKHVTTIV (144 aa)).

It belongs to the PurH family.

It catalyses the reaction (6R)-10-formyltetrahydrofolate + 5-amino-1-(5-phospho-beta-D-ribosyl)imidazole-4-carboxamide = 5-formamido-1-(5-phospho-D-ribosyl)imidazole-4-carboxamide + (6S)-5,6,7,8-tetrahydrofolate. It carries out the reaction IMP + H2O = 5-formamido-1-(5-phospho-D-ribosyl)imidazole-4-carboxamide. It participates in purine metabolism; IMP biosynthesis via de novo pathway; 5-formamido-1-(5-phospho-D-ribosyl)imidazole-4-carboxamide from 5-amino-1-(5-phospho-D-ribosyl)imidazole-4-carboxamide (10-formyl THF route): step 1/1. The protein operates within purine metabolism; IMP biosynthesis via de novo pathway; IMP from 5-formamido-1-(5-phospho-D-ribosyl)imidazole-4-carboxamide: step 1/1. The polypeptide is Bifunctional purine biosynthesis protein PurH (Staphylococcus aureus (strain MRSA252)).